The chain runs to 143 residues: Transcriptional regulator MraZ (143 aa).

SpoVT-AbrB domains lie at threonine 5 to glutamate 47 and threonine 76 to alanine 119.

The protein belongs to the MraZ family. As to quaternary structure, forms oligomers.

The protein localises to the cytoplasm. The protein resides in the nucleoid. The chain is Transcriptional regulator MraZ from Mycobacterium sp. (strain JLS).